A 445-amino-acid chain; its full sequence is tRNA-2-methylthio-N(6)-dimethylallyladenosine synthase (445 aa).

The region spanning 2–117 (QGLYIKSYGC…LPELIVKARK (116 aa)) is the MTTase N-terminal domain. Residues cysteine 11, cysteine 47, cysteine 80, cysteine 157, cysteine 161, and cysteine 164 each contribute to the [4Fe-4S] cluster site. In terms of domain architecture, Radical SAM core spans 143-374 (KNQKVSAFIS…QELVHKQQLE (232 aa)). Positions 377-441 (KKMIGETHPV…KNHLTGIIPH (65 aa)) constitute a TRAM domain.

Belongs to the methylthiotransferase family. MiaB subfamily. In terms of assembly, monomer. Requires [4Fe-4S] cluster as cofactor.

The protein localises to the cytoplasm. The catalysed reaction is N(6)-dimethylallyladenosine(37) in tRNA + (sulfur carrier)-SH + AH2 + 2 S-adenosyl-L-methionine = 2-methylsulfanyl-N(6)-dimethylallyladenosine(37) in tRNA + (sulfur carrier)-H + 5'-deoxyadenosine + L-methionine + A + S-adenosyl-L-homocysteine + 2 H(+). In terms of biological role, catalyzes the methylthiolation of N6-(dimethylallyl)adenosine (i(6)A), leading to the formation of 2-methylthio-N6-(dimethylallyl)adenosine (ms(2)i(6)A) at position 37 in tRNAs that read codons beginning with uridine. This Ehrlichia ruminantium (strain Gardel) protein is tRNA-2-methylthio-N(6)-dimethylallyladenosine synthase.